We begin with the raw amino-acid sequence, 367 residues long: dTDP-4-amino-4,6-dideoxy-D-glucose transaminase (367 aa).

Lys-184 is subject to N6-(pyridoxal phosphate)lysine.

Belongs to the DegT/DnrJ/EryC1 family. Requires pyridoxal 5'-phosphate as cofactor.

The enzyme catalyses dTDP-4-amino-4,6-dideoxy-D-glucose + 2-oxoglutarate = dTDP-4-dehydro-6-deoxy-alpha-D-glucose + L-glutamate. It functions in the pathway bacterial outer membrane biogenesis; lipopolysaccharide biosynthesis. Catalyzes the conversion of dTDP-4-dehydro-6-deoxy-D-glucose (dTDP-D-Glc4O) to dTDP-4-amino-4,6-dideoxy-D-glucose (dTDP-D-Qui4N). L-glutamine can also be used as amino donor. This chain is dTDP-4-amino-4,6-dideoxy-D-glucose transaminase (vioA), found in Shigella dysenteriae.